Consider the following 81-residue polypeptide: Putative membrane protein insertion efficiency factor (81 aa).

The tract at residues 59–81 (PWNPGGYDPVPPIKTSRSSSMAE) is disordered.

It belongs to the UPF0161 family.

The protein resides in the cell inner membrane. Functionally, could be involved in insertion of integral membrane proteins into the membrane. This Azotobacter vinelandii (strain DJ / ATCC BAA-1303) protein is Putative membrane protein insertion efficiency factor.